A 171-amino-acid polypeptide reads, in one-letter code: Adenine phosphoribosyltransferase (171 aa).

The protein belongs to the purine/pyrimidine phosphoribosyltransferase family. As to quaternary structure, homodimer.

Its subcellular location is the cytoplasm. The enzyme catalyses AMP + diphosphate = 5-phospho-alpha-D-ribose 1-diphosphate + adenine. Its pathway is purine metabolism; AMP biosynthesis via salvage pathway; AMP from adenine: step 1/1. Functionally, catalyzes a salvage reaction resulting in the formation of AMP, that is energically less costly than de novo synthesis. The chain is Adenine phosphoribosyltransferase from Methylococcus capsulatus (strain ATCC 33009 / NCIMB 11132 / Bath).